A 1368-amino-acid chain; its full sequence is DNA-directed RNA polymerase subunit beta (1368 aa).

This sequence belongs to the RNA polymerase beta chain family. The RNAP catalytic core consists of 2 alpha, 1 beta, 1 beta' and 1 omega subunit. When a sigma factor is associated with the core the holoenzyme is formed, which can initiate transcription.

The enzyme catalyses RNA(n) + a ribonucleoside 5'-triphosphate = RNA(n+1) + diphosphate. Functionally, DNA-dependent RNA polymerase catalyzes the transcription of DNA into RNA using the four ribonucleoside triphosphates as substrates. The chain is DNA-directed RNA polymerase subunit beta from Burkholderia thailandensis (strain ATCC 700388 / DSM 13276 / CCUG 48851 / CIP 106301 / E264).